The following is a 481-amino-acid chain: Glutamate--glyoxylate aminotransferase 2 (481 aa).

Residue K291 is modified to N6-(pyridoxal phosphate)lysine. The Peroxisomal targeting signal signature appears at 479-481; that stretch reads SRM.

The protein belongs to the class-I pyridoxal-phosphate-dependent aminotransferase family. Alanine aminotransferase subfamily. In terms of assembly, homodimer. Pyridoxal 5'-phosphate serves as cofactor. Post-translationally, the N-terminus is blocked. As to expression, expressed at low levels in seedlings, leaves, flowers, roots, and green siliques.

The protein localises to the peroxisome. It catalyses the reaction L-alanine + 2-oxoglutarate = pyruvate + L-glutamate. It carries out the reaction glyoxylate + L-alanine = glycine + pyruvate. The catalysed reaction is glycine + 2-oxoglutarate = glyoxylate + L-glutamate. Its pathway is photosynthesis; C4 acid pathway. The protein operates within amino-acid degradation; L-alanine degradation via transaminase pathway; pyruvate from L-alanine: step 1/1. In terms of biological role, catalyzes the Glu:glyoxylate aminotransferase (GGT), Ala:glyoxylate aminotransferase (AGT), Ala:2-oxoglutarate aminotransferase (AKT) and Glu:pyruvate aminotransferase (GPT) reactions in peroxisomes. In Arabidopsis thaliana (Mouse-ear cress), this protein is Glutamate--glyoxylate aminotransferase 2 (GGAT2).